A 450-amino-acid polypeptide reads, in one-letter code: tRNA modification GTPase MnmE (450 aa).

Residues R23, E79, and K118 each contribute to the (6S)-5-formyl-5,6,7,8-tetrahydrofolate site. The region spanning 214–374 (GITLILVGKP…LKEHILNKVG (161 aa)) is the TrmE-type G domain. N224 provides a ligand contact to K(+). Residues 224 to 229 (NAGKSS), 243 to 249 (TSIAGTT), and 268 to 271 (DTAG) contribute to the GTP site. S228 is a Mg(2+) binding site. K(+) is bound by residues T243, I245, and T248. T249 contributes to the Mg(2+) binding site. K450 lines the (6S)-5-formyl-5,6,7,8-tetrahydrofolate pocket.

It belongs to the TRAFAC class TrmE-Era-EngA-EngB-Septin-like GTPase superfamily. TrmE GTPase family. In terms of assembly, homodimer. Heterotetramer of two MnmE and two MnmG subunits. K(+) serves as cofactor.

The protein localises to the cytoplasm. Exhibits a very high intrinsic GTPase hydrolysis rate. Involved in the addition of a carboxymethylaminomethyl (cmnm) group at the wobble position (U34) of certain tRNAs, forming tRNA-cmnm(5)s(2)U34. This is tRNA modification GTPase MnmE from Francisella tularensis subsp. holarctica (strain OSU18).